The primary structure comprises 247 residues: Cell division protein ZapD (247 aa).

This sequence belongs to the ZapD family. In terms of assembly, interacts with FtsZ.

The protein resides in the cytoplasm. In terms of biological role, cell division factor that enhances FtsZ-ring assembly. Directly interacts with FtsZ and promotes bundling of FtsZ protofilaments, with a reduction in FtsZ GTPase activity. This Shigella boydii serotype 4 (strain Sb227) protein is Cell division protein ZapD.